The following is a 211-amino-acid chain: Claudin-7 (211 aa).

The Cytoplasmic segment spans residues 1 to 7 (MANSGLQ). A helical transmembrane segment spans residues 8-28 (LLGFSMALLGWVGLVACTAIP). Residues 29-81 (QWQMSSYAGDNIITAQAMYKGLWMDCVTQSTGMMSCKMYDSVLALSAALQATR) are Extracellular-facing. The helical transmembrane segment at 82-102 (ALMVVSLVLGFLAMFVATMGM) threads the bilayer. Topologically, residues 103-117 (KCTRCGGDDKVKKAR) are cytoplasmic. The helical transmembrane segment at 118-138 (IAMGGGIIFIVAGLAALVACS) threads the bilayer. Residues 139-160 (WYGHQIVTDFYNPLIPTNIKYE) are Extracellular-facing. A helical transmembrane segment spans residues 161 to 181 (FGPAIFIGWAGSALVILGGAL). The Cytoplasmic segment spans residues 182–211 (LSCSCPGNESKAGYRVPRSYPKSNSSKEYV). An interactions with TJP1, TJP2 and TJP3 region spans residues 210–211 (YV).

The protein belongs to the claudin family. In terms of assembly, directly interacts with TJP1/ZO-1, TJP2/ZO-2 and TJP3/ZO-3. The phosphorylated form interacts with EPCAM. Does not interact with CD81. Phosphorylated. As to expression, expressed in kidney, lung and prostate. Isoform 1 seems to be predominant, except in some normal prostate samples, where isoform 2 is the major form. Down-regulated in breast cancers, including ductal carcinoma in situ (DCIS), lobular carcinoma in situ (LCIS) and invasive ductal carcinoma (IDC) (at protein level), as well as in several cancer cell lines. Loss of expression correlates with histological grade, occurring predominantly in high-grade lesions.

Its subcellular location is the cell membrane. The protein resides in the basolateral cell membrane. It localises to the cell junction. The protein localises to the tight junction. Plays a major role in tight junction-specific obliteration of the intercellular space. The protein is Claudin-7 (CLDN7) of Homo sapiens (Human).